The chain runs to 359 residues: 3-dehydroquinate synthase (359 aa).

NAD(+)-binding positions include 71–76, 105–109, 129–130, K142, and K151; these read DGEAYK, GVIGD, and TT. Residues E184, H247, and H264 each contribute to the Zn(2+) site.

The protein belongs to the sugar phosphate cyclases superfamily. Dehydroquinate synthase family. Co(2+) serves as cofactor. Requires Zn(2+) as cofactor. NAD(+) is required as a cofactor.

It is found in the cytoplasm. The catalysed reaction is 7-phospho-2-dehydro-3-deoxy-D-arabino-heptonate = 3-dehydroquinate + phosphate. It participates in metabolic intermediate biosynthesis; chorismate biosynthesis; chorismate from D-erythrose 4-phosphate and phosphoenolpyruvate: step 2/7. Functionally, catalyzes the conversion of 3-deoxy-D-arabino-heptulosonate 7-phosphate (DAHP) to dehydroquinate (DHQ). This chain is 3-dehydroquinate synthase, found in Burkholderia ambifaria (strain MC40-6).